The primary structure comprises 28 residues: 14-3-3-like protein 4 (28 aa).

Belongs to the 14-3-3 family.

The polypeptide is 14-3-3-like protein 4 (Pseudotsuga menziesii (Douglas-fir)).